Consider the following 130-residue polypeptide: Small ribosomal subunit protein uS12c (130 aa).

The protein belongs to the universal ribosomal protein uS12 family. Part of the 30S ribosomal subunit.

Its subcellular location is the plastid. The protein localises to the chloroplast. In terms of biological role, with S4 and S5 plays an important role in translational accuracy. Located at the interface of the 30S and 50S subunits. In Tetradesmus obliquus (Green alga), this protein is Small ribosomal subunit protein uS12c (rps12).